Here is a 1132-residue protein sequence, read N- to C-terminus: Rho GTPase-activating protein gacE (1132 aa).

In terms of domain architecture, Rho-GAP spans 76–262 (LEMNKILKSE…FLISNYLNVF (187 aa)). Disordered stretches follow at residues 279–354 (NELL…SSPI) and 472–517 (NSTT…SLIN). The span at 281 to 301 (LLNNNNNNNNVIMPTTTTTTT) shows a compositional bias: low complexity. A compositionally biased stretch (polar residues) spans 302-311 (SASSSILPTD). Low complexity-rich tracts occupy residues 328–354 (SIPL…SSPI), 473–498 (STTT…STTT), and 507–517 (SNSASNNSLIN).

The protein resides in the cytoplasm. In terms of biological role, rho GTPase-activating protein involved in the signal transduction pathway. The protein is Rho GTPase-activating protein gacE (gacE) of Dictyostelium discoideum (Social amoeba).